A 144-amino-acid chain; its full sequence is 3-hydroxyacyl-[acyl-carrier-protein] dehydratase FabZ (144 aa).

Residue histidine 48 is part of the active site.

Belongs to the thioester dehydratase family. FabZ subfamily.

It is found in the cytoplasm. The enzyme catalyses a (3R)-hydroxyacyl-[ACP] = a (2E)-enoyl-[ACP] + H2O. Its function is as follows. Involved in unsaturated fatty acids biosynthesis. Catalyzes the dehydration of short chain beta-hydroxyacyl-ACPs and long chain saturated and unsaturated beta-hydroxyacyl-ACPs. The polypeptide is 3-hydroxyacyl-[acyl-carrier-protein] dehydratase FabZ (Bacillus cytotoxicus (strain DSM 22905 / CIP 110041 / 391-98 / NVH 391-98)).